Here is a 930-residue protein sequence, read N- to C-terminus: MDYKETLILPDTSFPMRGNLPANEPHTYAKWRDEKLYSKLKNAHSGAKNFCLHDGPPYANGHLHIGHALNKILKDIIVKYHYFKGENIRYTPGWDCHGLPIEQQVEQKIGKAKKDNLNKTKLRELCRNHAQKFIQIQSDEFQALGVLGDFENPYKTMDFAFEAQIYRSLIELVKEGLLAERSKPIYWSWACETALADAEVEYQDKQSDSIFVAFTLSDSALQSLGISQGKVIIWTTTPWTLPANVGIALNPSESYVLTDKGYIVAKALLEKVCENIDIGISKREFKAQEFERLEAINPLNGRTSLIVLGEHVSINDGTGAVHTAPGHGEDDYYIGLKYGLEVIMPVDDRGNFSPLIESMGLVPKEFANEFVGKNIFDTHESIFKILGKALLKQDVITHSYPHCWRSHKPVIYRATAQWFILLDKPFYQGKTLKELALEELDKVRFYPQNGKNRIYSMIENRPDWCISRQRDWGVPIAFLIDKITNVALLDEAVLEHIACIFEKEGCDAWWSYEIKDLLPPSHKHLAENLTKSKHILDVWFDSGSTWSAVLENEYKGAGNNYDAGSHPADMYLEGSDQHRGWFQSSLLLSCAIAKRAPYKQILTHGFTFDRNGEKMSKSKGNVISPSEIIKTQGSEILRLWVALSHYQSDQNISDEILKQVGEQYRKIRNTIRFLLANASQNSQDMVEKDELDVIDRWILSVCDRVFDEAYEYFDEYEFAKAFQVVMSFLINELSGIYLDLCKDILYCDDVSSLRRRAIQSALVMILRRVLHFIAPVLTYTADEAFRHSSAALKGEYESIFDLPKLSCAQGYNLEINEDFTRLLRVREKFTESLDNLKKQKIVKSSLEVLLQSPQEKEFALLDRWLIVSGVCGKECKDKEELARFMLEDKEEFVIYRAQNGRCERCWQFIVEESEGKLCKRCTSVIAQTKK.

The 'HIGH' region motif lies at 57 to 67; that stretch reads PYANGHLHIGH. E573 contributes to the L-isoleucyl-5'-AMP binding site. A 'KMSKS' region motif is present at residues 614–618; that stretch reads KMSKS. K617 contacts ATP. C902, C905, C918, and C921 together coordinate Zn(2+).

It belongs to the class-I aminoacyl-tRNA synthetase family. IleS type 1 subfamily. Monomer. Zn(2+) serves as cofactor.

It localises to the cytoplasm. The catalysed reaction is tRNA(Ile) + L-isoleucine + ATP = L-isoleucyl-tRNA(Ile) + AMP + diphosphate. Functionally, catalyzes the attachment of isoleucine to tRNA(Ile). As IleRS can inadvertently accommodate and process structurally similar amino acids such as valine, to avoid such errors it has two additional distinct tRNA(Ile)-dependent editing activities. One activity is designated as 'pretransfer' editing and involves the hydrolysis of activated Val-AMP. The other activity is designated 'posttransfer' editing and involves deacylation of mischarged Val-tRNA(Ile). This chain is Isoleucine--tRNA ligase, found in Helicobacter hepaticus (strain ATCC 51449 / 3B1).